Consider the following 128-residue polypeptide: Large ribosomal subunit protein bL17 (128 aa).

The protein belongs to the bacterial ribosomal protein bL17 family. As to quaternary structure, part of the 50S ribosomal subunit. Contacts protein L32.

The sequence is that of Large ribosomal subunit protein bL17 from Petrotoga mobilis (strain DSM 10674 / SJ95).